The primary structure comprises 202 residues: Large ribosomal subunit protein uL4 (202 aa).

The interval 47 to 67 (KTKAEVSGGGVKPWKQKGTGR) is disordered.

It belongs to the universal ribosomal protein uL4 family. In terms of assembly, part of the 50S ribosomal subunit.

Functionally, one of the primary rRNA binding proteins, this protein initially binds near the 5'-end of the 23S rRNA. It is important during the early stages of 50S assembly. It makes multiple contacts with different domains of the 23S rRNA in the assembled 50S subunit and ribosome. Forms part of the polypeptide exit tunnel. This chain is Large ribosomal subunit protein uL4, found in Dichelobacter nodosus (strain VCS1703A).